The primary structure comprises 501 residues: Membrane-bound lytic murein transglycosylase F (501 aa).

The N-terminal stretch at 1–29 is a signal peptide; the sequence is MTKILLNTASTVLTRLWKLSLLGLVFAVA. The segment at 30–274 is non-LT domain; it reads AATLVSSRIP…DAMETFYGHL (245 aa). The LT domain stretch occupies residues 275–501; the sequence is GEIDYSGAIL…VKSISGTSSL (227 aa). The active site involves Glu321.

The protein in the N-terminal section; belongs to the bacterial solute-binding protein 3 family. It in the C-terminal section; belongs to the transglycosylase Slt family.

It is found in the cell outer membrane. It carries out the reaction Exolytic cleavage of the (1-&gt;4)-beta-glycosidic linkage between N-acetylmuramic acid (MurNAc) and N-acetylglucosamine (GlcNAc) residues in peptidoglycan, from either the reducing or the non-reducing ends of the peptidoglycan chains, with concomitant formation of a 1,6-anhydrobond in the MurNAc residue.. Functionally, murein-degrading enzyme that degrades murein glycan strands and insoluble, high-molecular weight murein sacculi, with the concomitant formation of a 1,6-anhydromuramoyl product. Lytic transglycosylases (LTs) play an integral role in the metabolism of the peptidoglycan (PG) sacculus. Their lytic action creates space within the PG sacculus to allow for its expansion as well as for the insertion of various structures such as secretion systems and flagella. This Saccharophagus degradans (strain 2-40 / ATCC 43961 / DSM 17024) protein is Membrane-bound lytic murein transglycosylase F.